The sequence spans 303 residues: UDP-3-O-acyl-N-acetylglucosamine deacetylase (303 aa).

Zn(2+) contacts are provided by His-78, His-237, and Asp-241. The active-site Proton donor is the His-264.

This sequence belongs to the LpxC family. Zn(2+) is required as a cofactor.

The enzyme catalyses a UDP-3-O-[(3R)-3-hydroxyacyl]-N-acetyl-alpha-D-glucosamine + H2O = a UDP-3-O-[(3R)-3-hydroxyacyl]-alpha-D-glucosamine + acetate. It functions in the pathway glycolipid biosynthesis; lipid IV(A) biosynthesis; lipid IV(A) from (3R)-3-hydroxytetradecanoyl-[acyl-carrier-protein] and UDP-N-acetyl-alpha-D-glucosamine: step 2/6. Functionally, catalyzes the hydrolysis of UDP-3-O-myristoyl-N-acetylglucosamine to form UDP-3-O-myristoylglucosamine and acetate, the committed step in lipid A biosynthesis. In Xanthomonas campestris pv. campestris (strain B100), this protein is UDP-3-O-acyl-N-acetylglucosamine deacetylase.